A 23-amino-acid chain; its full sequence is Septenin 2a (23 aa).

As to expression, expressed in skin glands.

The protein resides in the secreted. In terms of biological role, may act as an antimicrobial peptide. This chain is Septenin 2a, found in Osteopilus septentrionalis (Cuban treefrog).